We begin with the raw amino-acid sequence, 426 residues long: Glutamate-1-semialdehyde 2,1-aminomutase (426 aa).

Lys-265 carries the N6-(pyridoxal phosphate)lysine modification.

The protein belongs to the class-III pyridoxal-phosphate-dependent aminotransferase family. HemL subfamily. In terms of assembly, homodimer. Pyridoxal 5'-phosphate serves as cofactor.

It is found in the cytoplasm. It catalyses the reaction (S)-4-amino-5-oxopentanoate = 5-aminolevulinate. It functions in the pathway porphyrin-containing compound metabolism; protoporphyrin-IX biosynthesis; 5-aminolevulinate from L-glutamyl-tRNA(Glu): step 2/2. This is Glutamate-1-semialdehyde 2,1-aminomutase from Escherichia coli O7:K1 (strain IAI39 / ExPEC).